Reading from the N-terminus, the 60-residue chain is Large ribosomal subunit protein bL32 (60 aa).

Basic residues predominate over residues 1–23 (MAKHPVPKKKTSKSKRDMRRSHH). The disordered stretch occupies residues 1–26 (MAKHPVPKKKTSKSKRDMRRSHHALV).

This sequence belongs to the bacterial ribosomal protein bL32 family.

The sequence is that of Large ribosomal subunit protein bL32 from Deinococcus geothermalis (strain DSM 11300 / CIP 105573 / AG-3a).